We begin with the raw amino-acid sequence, 385 residues long: Urotensin-2 receptor (385 aa).

The Extracellular portion of the chain corresponds to 1-53; that stretch reads MALSLESTSFPMLAVSRSTASELPGGFNVSHNSSWTGPTDPSSLQDLVATGVI. Residues Asn28 and Asn32 are each glycosylated (N-linked (GlcNAc...) asparagine). Residues 54 to 76 traverse the membrane as a helical segment; sequence GAVLSTMGVVGVVGNVYTLVVMC. At 77–86 the chain is on the cytoplasmic side; the sequence is RFLRASASMY. Residues 87 to 112 form a helical membrane-spanning segment; sequence VYVVNLALADLLYLLSIPFIVATYVT. Topologically, residues 113–123 are extracellular; that stretch reads KDWHFGDVGCR. Cys122 and Cys198 are joined by a disulfide. A helical membrane pass occupies residues 124–145; it reads VLFSLDFLTMHASIFTLTIMSS. The Cytoplasmic segment spans residues 146 to 166; sequence ERYAAVLRPLDTVQRSKGYRK. Residues 167-185 traverse the membrane as a helical segment; sequence LLALGTWLLALLLTLPMML. At 186-208 the chain is on the extracellular side; the sequence is AIRLVRRGSKSLCLPAWGPRAHR. A helical membrane pass occupies residues 209–231; the sequence is TYLTLLFGTSIVGPGLVIGLLYI. Residues 232–257 lie on the Cytoplasmic side of the membrane; the sequence is RLARAYWLSQQASFKQTRRLPNPRVL. Residues 258-283 traverse the membrane as a helical segment; the sequence is YLILGIVLLFWACFLPFWLWQLLAQY. Residues 284-298 are Extracellular-facing; that stretch reads HQAMPLTPETARIIN. Residues 299-320 traverse the membrane as a helical segment; the sequence is YLTACLTYGNSCINPFLYTLLT. At 321–385 the chain is on the cytoplasmic side; the sequence is KNYREYLRGR…SPVPPNGAFV (65 aa).

This sequence belongs to the G-protein coupled receptor 1 family.

Its subcellular location is the cell membrane. Functionally, high affinity receptor for urotensin-2 and urotensin-2B. The activity of this receptor is mediated by a G-protein that activate a phosphatidylinositol-calcium second messenger system. The sequence is that of Urotensin-2 receptor (Uts2r) from Mus musculus (Mouse).